A 283-amino-acid polypeptide reads, in one-letter code: Undecaprenyl-diphosphatase (283 aa).

The next 7 membrane-spanning stretches (helical) occupy residues 1–21, 40–60, 85–105, 117–137, 196–216, 232–252, and 258–278; these read MDII…FLPI, GAAF…IYFY, SRMG…GLLF, YIIS…EYLV, FSFL…LLKV, VATV…LDYL, and YLFI…LSMG.

The protein belongs to the UppP family.

It localises to the cell inner membrane. It catalyses the reaction di-trans,octa-cis-undecaprenyl diphosphate + H2O = di-trans,octa-cis-undecaprenyl phosphate + phosphate + H(+). Its function is as follows. Catalyzes the dephosphorylation of undecaprenyl diphosphate (UPP). Confers resistance to bacitracin. This Chloroherpeton thalassium (strain ATCC 35110 / GB-78) protein is Undecaprenyl-diphosphatase.